The primary structure comprises 104 residues: Large ribosomal subunit protein bL21 (104 aa).

It belongs to the bacterial ribosomal protein bL21 family. In terms of assembly, part of the 50S ribosomal subunit. Contacts protein L20.

In terms of biological role, this protein binds to 23S rRNA in the presence of protein L20. This is Large ribosomal subunit protein bL21 from Acidiphilium cryptum (strain JF-5).